The following is a 135-amino-acid chain: Protein PsiE homolog (135 aa).

4 consecutive transmembrane segments (helical) span residues 20–40 (VGLL…TIHL), 54–74 (YLLI…ALIV), 82–102 (HFPL…LIIV), and 107–127 (PIDT…LYLA).

This sequence belongs to the PsiE family.

It is found in the cell inner membrane. This is Protein PsiE homolog from Serratia proteamaculans (strain 568).